Consider the following 195-residue polypeptide: Rubrerythrin (195 aa).

Residues 1–150 (MKSLKGTKTA…KLAKNIEEGK (150 aa)) form the Ferritin-like diiron domain. Residues glutamate 20, glutamate 53, glutamate 98, glutamate 101, glutamate 132, histidine 135, cysteine 162, cysteine 165, cysteine 178, and cysteine 181 each contribute to the Fe(3+) site. Residues 157-195 (VVLWKCGNCGFIWEGAEAPLKCPACLHPQAYFEVFKETY) form the Rubredoxin-like domain.

Homodimer. Possesses two rubredoxin-like centers and two non-sulfur oxo-bridged di-iron centers per dimer. The cofactor is Fe(3+).

It localises to the cytoplasm. Its function is as follows. May provide oxidative stress protection via catalytic reduction of intracellular hydrogen peroxide. This is Rubrerythrin (rbr) from Clostridium perfringens (strain 13 / Type A).